Consider the following 932-residue polypeptide: Protein translocase subunit SecA (932 aa).

ATP-binding positions include Gln87, 105-109, and Asp515; that span reads GEGKT. Zn(2+)-binding residues include Cys916, Cys918, Cys927, and His928.

It belongs to the SecA family. As to quaternary structure, monomer and homodimer. Part of the essential Sec protein translocation apparatus which comprises SecA, SecYEG and auxiliary proteins SecDF-YajC and YidC. It depends on Zn(2+) as a cofactor.

It localises to the cell inner membrane. The protein resides in the cytoplasm. The enzyme catalyses ATP + H2O + cellular proteinSide 1 = ADP + phosphate + cellular proteinSide 2.. Functionally, part of the Sec protein translocase complex. Interacts with the SecYEG preprotein conducting channel. Has a central role in coupling the hydrolysis of ATP to the transfer of proteins into and across the cell membrane, serving both as a receptor for the preprotein-SecB complex and as an ATP-driven molecular motor driving the stepwise translocation of polypeptide chains across the membrane. In Burkholderia lata (strain ATCC 17760 / DSM 23089 / LMG 22485 / NCIMB 9086 / R18194 / 383), this protein is Protein translocase subunit SecA.